We begin with the raw amino-acid sequence, 293 residues long: UDP-3-O-acyl-N-acetylglucosamine deacetylase (293 aa).

Zn(2+) contacts are provided by histidine 79, histidine 236, and aspartate 240. Histidine 263 (proton donor) is an active-site residue.

Belongs to the LpxC family. Requires Zn(2+) as cofactor.

It carries out the reaction a UDP-3-O-[(3R)-3-hydroxyacyl]-N-acetyl-alpha-D-glucosamine + H2O = a UDP-3-O-[(3R)-3-hydroxyacyl]-alpha-D-glucosamine + acetate. The protein operates within glycolipid biosynthesis; lipid IV(A) biosynthesis; lipid IV(A) from (3R)-3-hydroxytetradecanoyl-[acyl-carrier-protein] and UDP-N-acetyl-alpha-D-glucosamine: step 2/6. Catalyzes the hydrolysis of UDP-3-O-myristoyl-N-acetylglucosamine to form UDP-3-O-myristoylglucosamine and acetate, the committed step in lipid A biosynthesis. This is UDP-3-O-acyl-N-acetylglucosamine deacetylase from Phenylobacterium zucineum (strain HLK1).